The sequence spans 249 residues: Probable septum site-determining protein MinC (249 aa).

Residues 117-138 form a disordered region; the sequence is AVRPPQPPPPPHARAEPAAPVA.

Belongs to the MinC family. Interacts with MinD and FtsZ.

In terms of biological role, cell division inhibitor that blocks the formation of polar Z ring septums. Rapidly oscillates between the poles of the cell to destabilize FtsZ filaments that have formed before they mature into polar Z rings. Prevents FtsZ polymerization. The protein is Probable septum site-determining protein MinC of Xanthomonas campestris pv. campestris (strain 8004).